The primary structure comprises 215 residues: Pyrrolidone-carboxylate peptidase (215 aa).

Catalysis depends on residues Glu-80, Cys-143, and His-167.

The protein belongs to the peptidase C15 family. In terms of assembly, homotetramer.

The protein resides in the cytoplasm. It carries out the reaction Release of an N-terminal pyroglutamyl group from a polypeptide, the second amino acid generally not being Pro.. Functionally, removes 5-oxoproline from various penultimate amino acid residues except L-proline. The protein is Pyrrolidone-carboxylate peptidase of Bacillus anthracis.